The following is a 204-amino-acid chain: Probable chorismate pyruvate-lyase (204 aa).

Residues Arg75, Leu113, and Glu160 each coordinate substrate.

It belongs to the UbiC family.

The protein resides in the cytoplasm. It catalyses the reaction chorismate = 4-hydroxybenzoate + pyruvate. The protein operates within cofactor biosynthesis; ubiquinone biosynthesis. Functionally, removes the pyruvyl group from chorismate, with concomitant aromatization of the ring, to provide 4-hydroxybenzoate (4HB) for the ubiquinone pathway. This is Probable chorismate pyruvate-lyase from Alcanivorax borkumensis (strain ATCC 700651 / DSM 11573 / NCIMB 13689 / SK2).